The following is a 214-amino-acid chain: Small ribosomal subunit protein uS3c (214 aa).

Positions 39–111 (IRTYIHTISK…QLTINVLEVE (73 aa)) constitute a KH type-2 domain.

The protein belongs to the universal ribosomal protein uS3 family. As to quaternary structure, part of the 30S ribosomal subunit.

It is found in the plastid. Its subcellular location is the chloroplast. This chain is Small ribosomal subunit protein uS3c (rps3), found in Phaeodactylum tricornutum (strain CCAP 1055/1).